A 163-amino-acid chain; its full sequence is MPPKGHKKTADGDFRPVNSAGNTIQAKQKYSIDDLLYPKSTIKNLAKETLPDDAIISKDALTAIQRAATLFVSYMASHGNASAEAGGRKKITPQDVFVALKDVDLAQFVPSVTQSVNEFEQEVAQRKKDKVVRAQDDQDHISSSESETEATEEEGNKRIRTDE.

Disordered stretches follow at residues 1-22 and 126-163; these read MPPK…SAGN and RKKD…RTDE. Basic and acidic residues-rich tracts occupy residues 126-142 and 154-163; these read RKKD…DHIS and EGNKRIRTDE.

As to quaternary structure, heterotetramer. Consists of four subunits: POL2, DPB2, DPB3 and DPB4.

It localises to the nucleus. In terms of biological role, as accessory component of the DNA polymerase epsilon (DNA polymerase II) participates in chromosomal DNA replication. This chain is DNA polymerase epsilon subunit D (DPB4), found in Yarrowia lipolytica (strain CLIB 122 / E 150) (Yeast).